Reading from the N-terminus, the 49-residue chain is Osteocalcin (49 aa).

Positions 1-47 (YLDSGLGAPVPYPDPLEPKREVCELNPNCDELADHIGFQEAYQRFYG) constitute a Gla domain. Positions 17, 21, 24, and 30 each coordinate Ca(2+). Residues glutamate 17, glutamate 21, and glutamate 24 each carry the 4-carboxyglutamate modification. An intrachain disulfide couples cysteine 23 to cysteine 29.

Belongs to the osteocalcin/matrix Gla protein family. Gamma-carboxyglutamate residues are formed by vitamin K dependent carboxylation by GGCX. These residues are essential for the binding of calcium. Decarboxylation promotes the hormone activity.

It localises to the secreted. Its function is as follows. The carboxylated form is one of the main organic components of the bone matrix, which constitutes 1-2% of the total bone protein. It acts as a negative regulator of bone formation and is required to limit bone formation without impairing bone resorption or mineralization. The carboxylated form binds strongly to apatite and calcium. The uncarboxylated form acts as a hormone secreted by osteoblasts, which regulates different cellular processes, such as energy metabolism, male fertility and brain development. Regulates of energy metabolism by acting as a hormone favoring pancreatic beta-cell proliferation, insulin secretion and sensitivity and energy expenditure. Uncarboxylated osteocalcin hormone also promotes testosterone production in the testes: acts as a ligand for G protein-coupled receptor GPRC6A at the surface of Leydig cells, initiating a signaling response that promotes the expression of enzymes required for testosterone synthesis in a CREB-dependent manner. Also acts as a regulator of brain development: osteocalcin hormone crosses the blood-brain barrier and acts as a ligand for GPR158 on neurons, initiating a signaling response that prevents neuronal apoptosis in the hippocampus, favors the synthesis of all monoamine neurotransmitters and inhibits that of gamma-aminobutyric acid (GABA). Osteocalcin also crosses the placenta during pregnancy and maternal osteocalcin is required for fetal brain development. This chain is Osteocalcin (BGLAP), found in Canis lupus familiaris (Dog).